Here is a 551-residue protein sequence, read N- to C-terminus: Solute carrier family 22 member 3 (551 aa).

A helical transmembrane segment spans residues 21–41 (VFLLLCLTGVTFAFLFVGVVF). N-linked (GlcNAc...) asparagine glycans are attached at residues asparagine 72, asparagine 99, and asparagine 114. Residues 177 to 197 (LIVYLISCFGVGITGVVVAFA) traverse the membrane as a helical segment. A glycan (N-linked (GlcNAc...) asparagine) is linked at asparagine 199. Transmembrane regions (helical) follow at residues 236 to 256 (IVGI…PGIA) and 264 to 284 (GIQL…WVVP). Residues 284-288 (PESPR) carry the Proline-rich sequence motif. The N-linked (GlcNAc...) asparagine glycan is linked to asparagine 317. Helical transmembrane passes span 376 to 396 (MDFF…LLTI), 463 to 483 (FGVS…PFLL), and 493 to 513 (LPLI…MLLP).

It belongs to the major facilitator (TC 2.A.1) superfamily. Organic cation transporter (TC 2.A.1.19) family. Highly expressed in placenta. Expressed in intestine, hear, kidney and lung. Widely expressed in brain, particularly in hippocampus, cerebellum, cerebral cortex. In the brain, expressed predominantly in regions located at the brain-cerebrospinal fluid border, with expression extending to regions that belong to monoaminergic pathways such as raphe nuclei, striatum and thalamus. In brain, expressed in neurons and glial cells of amygdala. Expression is low in kidney and lung and undetectable in liver. Expressed in Sertoli cells in testis. Expressed in tracheal and bronchial epithelium of the respiratory tract, where it localizes to the apical membrane of ciliated and brush cells, and in basal cells.

It localises to the cell membrane. Its subcellular location is the apical cell membrane. It is found in the basolateral cell membrane. The protein localises to the mitochondrion membrane. The protein resides in the endomembrane system. It localises to the nucleus membrane. Its subcellular location is the nucleus outer membrane. It carries out the reaction (R)-noradrenaline(out) = (R)-noradrenaline(in). The catalysed reaction is (R)-adrenaline(out) = (R)-adrenaline(in). It catalyses the reaction serotonin(out) = serotonin(in). The enzyme catalyses dopamine(out) = dopamine(in). It carries out the reaction histamine(out) = histamine(in). The catalysed reaction is tyramine(in) = tyramine(out). It catalyses the reaction guanidine(out) = guanidine(in). The enzyme catalyses agmatine(out) = agmatine(in). It carries out the reaction spermidine(in) = spermidine(out). The catalysed reaction is L-histidyl-L-proline diketopiperazine(in) = L-histidyl-L-proline diketopiperazine(out). It catalyses the reaction (R)-salsolinol(in) = (R)-salsolinol(out). In terms of biological role, electrogenic voltage-dependent transporter that mediates the transport of a variety of organic cations such as endogenous bioactive amines, cationic drugs and xenobiotics. Cation cellular uptake or release is driven by the electrochemical potential, i.e. membrane potential and concentration gradient. Functions as a Na(+)- and Cl(-)-independent, bidirectional uniporter. Implicated in neuronal monoamine neurotransmitters cellular uptake such as dopamine, adrenaline/epinephrine, noradrenaline/norepinephrine, histamine, serotonin and tyramine, thereby supporting a role in homeostatic regulation of aminergic neurotransmission in the brain. Transports dopaminergic neuromodulators cyclo(his-pro) and salsolinol with low efficiency. May be involved in the uptake and disposition of cationic compounds by renal clearance from the blood flow. May contribute to regulate the transport of cationic compounds in testis across the blood-testis-barrier. Mediates the transport of polyamine spermidine and putrescine. Mediates the bidirectional transport of polyamine agmatine. Also transports guanidine. May also mediate intracellular transport of organic cations, thereby playing a role in amine metabolism and intracellular signaling. The sequence is that of Solute carrier family 22 member 3 from Rattus norvegicus (Rat).